A 631-amino-acid polypeptide reads, in one-letter code: Peptide-N(4)-(N-acetyl-beta-glucosaminyl)asparagine amidase (631 aa).

The PUB domain occupies 34–97 (EAVRILLVLL…PSSNAYTLPT (64 aa)). Serine 126 bears the Phosphoserine mark. Residues cysteine 246, cysteine 249, cysteine 272, and cysteine 273 each coordinate Zn(2+). Cysteine 296 serves as the catalytic Nucleophile. Catalysis depends on residues histidine 323 and aspartate 340. A PAW domain is found at 441 to 631 (ELKGRSSGSL…YPFDLQVQLH (191 aa)).

This sequence belongs to the transglutaminase-like superfamily. PNGase family. Zn(2+) is required as a cofactor.

The protein localises to the cytoplasm. It catalyses the reaction Hydrolysis of an N(4)-(acetyl-beta-D-glucosaminyl)asparagine residue in which the glucosamine residue may be further glycosylated, to yield a (substituted) N-acetyl-beta-D-glucosaminylamine and a peptide containing an aspartate residue.. In terms of biological role, specifically deglycosylates the denatured form of N-linked glycoproteins in the cytoplasm and assists their proteasome-mediated degradation. Cleaves the beta-aspartyl-glucosamine (GlcNAc) of the glycan and the amide side chain of Asn, converting Asn to Asp. Prefers proteins containing high-mannose over those bearing complex type oligosaccharides. Can recognize misfolded proteins in the endoplasmic reticulum that are exported to the cytosol to be destroyed and deglycosylate them, while it has no activity toward native proteins. Deglycosylation is a prerequisite for subsequent proteasome-mediated degradation of some, but not all, misfolded glycoproteins. In Drosophila melanogaster (Fruit fly), this protein is Peptide-N(4)-(N-acetyl-beta-glucosaminyl)asparagine amidase (Pngl).